The sequence spans 770 residues: Protein PAT1 homolog 1 (770 aa).

Residues 1–42 are disordered; sequence MFRYESLEDCPLDEDEDAFQGLGEEDEEIDQFNDDTFGSGAV. Positions 1 to 84 are region A; interaction with DDX6/RCK; that stretch reads MFRYESLEDC…EMDLLGDHEE (84 aa). The segment at 1 to 397 is involved in nuclear foci localization; it reads MFRYESLEDC…HRVSHQDHLR (397 aa). The segment covering 7–33 has biased composition (acidic residues); sequence LEDCPLDEDEDAFQGLGEEDEEIDQFN. A region N; interaction with decapping machinery region spans residues 85-388; sequence NLAERLSKMV…LNGTGDRGGH (304 aa). The short motif at 86-95 is the Nuclear export signal element; sequence LAERLSKMVI. Serine 177 is subject to Phosphoserine. Position 178 is a phosphothreonine (threonine 178). 2 positions are modified to phosphoserine: serine 179 and serine 184. Residue threonine 194 is modified to Phosphothreonine. An asymmetric dimethylarginine mark is found at arginine 217, arginine 223, and arginine 263. The tract at residues 223-397 is involved in RNA-binding; sequence RYPAPYGERM…HRVSHQDHLR (175 aa). Serine 278 bears the Phosphoserine mark. Arginine 284 carries the asymmetric dimethylarginine modification. 2 disordered regions span residues 320 to 341 and 369 to 394; these read SAPPPATPPPQQHPPGPGPHLQ and QLQSRNQHRNLNGTGDRGGHRVSHQD. Pro residues predominate over residues 321–337; that stretch reads APPPATPPPQQHPPGPG. A compositionally biased stretch (low complexity) spans 369–380; sequence QLQSRNQHRNLN. Arginine 385 carries the post-translational modification Omega-N-methylarginine. A compositionally biased stretch (basic and acidic residues) spans 385–394; the sequence is RGGHRVSHQD. The region H stretch occupies residues 389–448; that stretch reads RVSHQDHLRKDPYANLMLQREKDWVSKIQMMQLQSTDPYLDDFYYQNYFEKLEKSSAAEE. An involved in nuclear speckle localization region spans residues 398-770; that stretch reads KDPYANLMLQ…TKLQLVQGMR (373 aa). Residues 449–770 form a region C region; sequence MQGDGPKKER…TKLQLVQGMR (322 aa).

Belongs to the PAT1 family. Interacts (via region A) with DDX6/RCK. Interacts (via region H and region C) with LSM1 and LSM4. Interacts (via region N) with DCP1A, DCP2, EDC3, EDC4 and XRN1. Interacts with the CCR4-NOT complex. Interacts with the Lsm-containing SMN-Sm protein complex. Interacts with EIF4ENIF1/4E-T.

The protein resides in the cytoplasm. It is found in the P-body. The protein localises to the nucleus. It localises to the PML body. Its subcellular location is the nucleus speckle. In terms of biological role, RNA-binding protein involved in deadenylation-dependent decapping of mRNAs, leading to the degradation of mRNAs. Acts as a scaffold protein that connects deadenylation and decapping machinery. Required for cytoplasmic mRNA processing body (P-body) assembly. The sequence is that of Protein PAT1 homolog 1 (Patl1) from Rattus norvegicus (Rat).